A 373-amino-acid chain; its full sequence is tRNA-specific 2-thiouridylase MnmA (373 aa).

ATP is bound by residues 12-19 (GMSGGVDS) and Met38. Positions 98-100 (NPD) are interaction with target base in tRNA. The Nucleophile role is filled by Cys103. An intrachain disulfide couples Cys103 to Cys200. Residue Gly127 participates in ATP binding. The segment at 150-152 (KDQ) is interaction with tRNA. The Cysteine persulfide intermediate role is filled by Cys200. Positions 312-313 (RY) are interaction with tRNA.

It belongs to the MnmA/TRMU family.

Its subcellular location is the cytoplasm. The catalysed reaction is S-sulfanyl-L-cysteinyl-[protein] + uridine(34) in tRNA + AH2 + ATP = 2-thiouridine(34) in tRNA + L-cysteinyl-[protein] + A + AMP + diphosphate + H(+). In terms of biological role, catalyzes the 2-thiolation of uridine at the wobble position (U34) of tRNA, leading to the formation of s(2)U34. The polypeptide is tRNA-specific 2-thiouridylase MnmA (Streptococcus pneumoniae (strain ATCC 700669 / Spain 23F-1)).